Consider the following 857-residue polypeptide: MSDPFEALKAEVDLLGRLLGEAIRKVSGERFFALVEEVRLLSKARRQGDGAAAEVLSQRVERMPVEEMEALVRAFTHYFHLVNLAEERHRVRVNRLRTEGETLENPRPEGFLALAKALKERGLSLEEAEAHLNRLALLLTFTAHPTETRRRTLRHHLERLQEELEGGDRERLLARVVLLYATEEVRKARPSVEDEIKGGLYYLPTTLWRAIPKVVEGLEAALERVYGKRPHLRSPVRFRSWMGGDRDGNPYVTPEVTAFAGRYAREVAKGRYLEELEALVRDLSLSEARIPVPKEVREGGEGVERFPGEPYRRYFAALYRALEGEALSTEGLARALKVAEKGLEGVGLAQVAQAFLRPLEARLSAFGLELAPLDLREESGKLLEAAAELLRLGGVHPDFLALSPEEKEALLTEELKTARPLLPVGEVPQGEALRVALGALRAWGDKGAHVVSMTHHPADLLAVFLLAREVGLYRPGKPLPFDVVPLFETLEDLERAPEVLRRLLANPVFRAHAQGRGGVEVMIGYSDSNKDAGFLMANLALYQAQEALHAVGEAQGIPVFFFHGRGTSTARGGGPAGRAIAGLPPKSVGHRLRLTEQGEALADRYAHPDLAVRHLEQLLYHFAQAALGDGVEPKAHWREALGEAGERSMARYRALLSQEGFFPFFEAFTPIREIGELPIASRPVYRHGRVRDIRDLRAIPWVMAWTQVRLLLPGWYGLSALEGLPMPLLREMYREWPFFATTLESAAMALAKADLGIAERYLKLVPEGLQGFYHHLAEEYRRTVALLEAIFEAPLLHNQKTLERQIALRNPYVDPINFVQVELLARYRAPGGREDEGVRRALLLSLLGVAAGLRNAG.

Residues histidine 144 and lysine 530 contribute to the active site.

The protein belongs to the PEPCase type 1 family. As to quaternary structure, homotetramer. It depends on Mg(2+) as a cofactor. Post-translationally, the N-terminus is blocked.

The enzyme catalyses oxaloacetate + phosphate = phosphoenolpyruvate + hydrogencarbonate. Functionally, forms oxaloacetate, a four-carbon dicarboxylic acid source for the tricarboxylic acid cycle. In Thermus sp. (strain 71), this protein is Phosphoenolpyruvate carboxylase (ppc).